Consider the following 333-residue polypeptide: MTSRPLAISAGDPAGVGAEIIAKAWRALRQDGPTFVVIGDAQLLASAGGGVKVRAVTRPQEAAQVFPDALPVLDIPVLSPVVYGRPSPSHAPQIIRWIETGVGLALSGAVSGLVTAPIAKAPLYEAGFQFPGHTEFLAELTAAASMVGARGPVMMLAAGDLRATLVTIHTALAKAPSALTTEAIINSGLVTAQALRKDFGIAEPRLAVAALNPHAGEGGALGREEIDIIAPAVEALRALGVQASGPAPADTLFHPEARARYDGVLCMYHDQALIPVKMLDFWGGVNITLGLPIVRTSPDHGTGFDIAGRGIARPDSLIAAIQLAAKIAARRGV.

2 residues coordinate substrate: His133 and Thr134. Residues His169, His214, and His269 each contribute to the a divalent metal cation site. Substrate contacts are provided by Lys277, Asn286, and Arg295.

The protein belongs to the PdxA family. In terms of assembly, homodimer. The cofactor is Zn(2+). Mg(2+) is required as a cofactor. Requires Co(2+) as cofactor.

It is found in the cytoplasm. The catalysed reaction is 4-(phosphooxy)-L-threonine + NAD(+) = 3-amino-2-oxopropyl phosphate + CO2 + NADH. It functions in the pathway cofactor biosynthesis; pyridoxine 5'-phosphate biosynthesis; pyridoxine 5'-phosphate from D-erythrose 4-phosphate: step 4/5. In terms of biological role, catalyzes the NAD(P)-dependent oxidation of 4-(phosphooxy)-L-threonine (HTP) into 2-amino-3-oxo-4-(phosphooxy)butyric acid which spontaneously decarboxylates to form 3-amino-2-oxopropyl phosphate (AHAP). The chain is 4-hydroxythreonine-4-phosphate dehydrogenase from Caulobacter vibrioides (strain ATCC 19089 / CIP 103742 / CB 15) (Caulobacter crescentus).